The following is a 226-amino-acid chain: Ribonuclease 3 (226 aa).

In terms of domain architecture, RNase III spans leucine 7–aspartate 129. Glutamate 42 contacts Mg(2+). The active site involves aspartate 46. Mg(2+) is bound by residues aspartate 115 and glutamate 118. Residue glutamate 118 is part of the active site. In terms of domain architecture, DRBM spans aspartate 156 to lysine 226.

The protein belongs to the ribonuclease III family. Homodimer. It depends on Mg(2+) as a cofactor.

The protein localises to the cytoplasm. It carries out the reaction Endonucleolytic cleavage to 5'-phosphomonoester.. Its function is as follows. Digests double-stranded RNA. Involved in the processing of primary rRNA transcript to yield the immediate precursors to the large and small rRNAs (23S and 16S). Processes some mRNAs, and tRNAs when they are encoded in the rRNA operon. Processes pre-crRNA and tracrRNA of type II CRISPR loci if present in the organism. The polypeptide is Ribonuclease 3 (Shewanella sp. (strain W3-18-1)).